The following is a 302-amino-acid chain: Homoserine O-acetyltransferase (302 aa).

Cys-142 (acyl-thioester intermediate) is an active-site residue. Substrate is bound by residues Lys-163 and Ser-192. The Proton acceptor role is filled by His-235. Glu-237 is an active-site residue. Arg-249 provides a ligand contact to substrate.

This sequence belongs to the MetA family.

The protein resides in the cytoplasm. The catalysed reaction is L-homoserine + acetyl-CoA = O-acetyl-L-homoserine + CoA. The protein operates within amino-acid biosynthesis; L-methionine biosynthesis via de novo pathway; O-acetyl-L-homoserine from L-homoserine: step 1/1. Transfers an acetyl group from acetyl-CoA to L-homoserine, forming acetyl-L-homoserine. The sequence is that of Homoserine O-acetyltransferase from Geobacillus sp. (strain WCH70).